We begin with the raw amino-acid sequence, 338 residues long: tRNA (cytidine(56)-2'-O)-methyltransferase (338 aa).

S-adenosyl-L-methionine-binding positions include Leu79 and 105-109 (GSEKV). The region spanning 188–295 (LINHVKSVKE…VAHADNLFAG (108 aa)) is the HD domain.

Belongs to the aTrm56 family. As to quaternary structure, homodimer.

It is found in the cytoplasm. It catalyses the reaction cytidine(56) in tRNA + S-adenosyl-L-methionine = 2'-O-methylcytidine(56) in tRNA + S-adenosyl-L-homocysteine + H(+). Functionally, specifically catalyzes the AdoMet-dependent 2'-O-ribose methylation of cytidine at position 56 in tRNAs. The sequence is that of tRNA (cytidine(56)-2'-O)-methyltransferase from Thermoplasma volcanium (strain ATCC 51530 / DSM 4299 / JCM 9571 / NBRC 15438 / GSS1).